A 187-amino-acid polypeptide reads, in one-letter code: HTH-type transcriptional repressor Rv1474c (187 aa).

One can recognise an HTH tetR-type domain in the interval 10-70; that stretch reads AARRRQILDG…ALAREDTERM (61 aa). The H-T-H motif DNA-binding region spans 33 to 52; the sequence is TVRRLEQAIGMSRGAIFHHF.

As to quaternary structure, homodimer.

Binding to DNA is abolished in the presence of high concentration of iron. Specifically binds to tetracycline, which leads to a conformational change in the structure of the protein and inhibits the DNA binding activity. Functionally, represses the expression of the aconitase gene acn and its own expression, in an iron-responsive manner. Binds to the inverted repeat element present in the upstream region of acn (Rv1475c)-Rv1474c operon. Preferentially binds to major groove of the DNA. In Mycobacterium tuberculosis (strain ATCC 25618 / H37Rv), this protein is HTH-type transcriptional repressor Rv1474c.